Reading from the N-terminus, the 314-residue chain is tRNA dimethylallyltransferase (314 aa).

8-15 (GPTGAGKS) is a binding site for ATP. 10 to 15 (TGAGKS) contacts substrate.

Belongs to the IPP transferase family. As to quaternary structure, monomer. It depends on Mg(2+) as a cofactor.

The enzyme catalyses adenosine(37) in tRNA + dimethylallyl diphosphate = N(6)-dimethylallyladenosine(37) in tRNA + diphosphate. Functionally, catalyzes the transfer of a dimethylallyl group onto the adenine at position 37 in tRNAs that read codons beginning with uridine, leading to the formation of N6-(dimethylallyl)adenosine (i(6)A). This Mycobacterium tuberculosis (strain ATCC 25177 / H37Ra) protein is tRNA dimethylallyltransferase.